The following is a 316-amino-acid chain: MSEDLKQIAQETESLRKVAFFGIAVSTIATLTAIIAVPMLYNYMQHVQSSLQSEVEFCQHRSNGLWDEYKRFQGVSGVEGRIKRDAYHRSLGVSGASRKARRQSYGNDAAVGGFGGSSGGSCCSCGSGAAGPAGSPGQDGAPGNDGAPGAPGNPGQDASEDQTAGPDSFCFDCPAGPPGPSGAPGQKGPSGAPGAPGQSGGAALPGPPGPAGPPGPAGQPGSNGNAGAPGAPGQVVDVPGTPGPAGPPGSPGPAGAPGQPGQAGSSQPGGPGPQGDAGAPGAPGAPGQAGAPGQDGESGSEGACDHCPPPRTAPGY.

The first 36 residues, 1-36 (MSEDLKQIAQETESLRKVAFFGIAVSTIATLTAIIA), serve as a signal peptide directing secretion. Low complexity-rich tracts occupy residues 127–157 (SGAA…PGQD) and 183–204 (APGQ…GAAL). Residues 127 to 316 (SGAAGPAGSP…CPPPRTAPGY (190 aa)) form a disordered region. Triple-helical region regions lie at residues 128–157 (GAAG…PGQD), 176–202 (GPPG…SGGA), 206–235 (GPPG…PGQV), 240–266 (GTPG…AGSS), and 269–304 (GGPG…EGAC). The segment covering 205–217 (PGPPGPAGPPGPA) has biased composition (pro residues). A compositionally biased stretch (low complexity) spans 219–234 (QPGSNGNAGAPGAPGQ). A compositionally biased stretch (pro residues) spans 241–251 (TPGPAGPPGSP). 2 stretches are compositionally biased toward low complexity: residues 256–266 (APGQPGQAGSS) and 276–295 (DAGA…PGQD). The span at 307–316 (CPPPRTAPGY) shows a compositional bias: pro residues.

This sequence belongs to the cuticular collagen family. In terms of assembly, collagen polypeptide chains are complexed within the cuticle by disulfide bonds and other types of covalent cross-links.

Its function is as follows. Nematode cuticles are composed largely of collagen-like proteins. The cuticle functions both as an exoskeleton and as a barrier to protect the worm from its environment. This Caenorhabditis elegans protein is Cuticle collagen 13 (col-13).